Consider the following 211-residue polypeptide: Uridine kinase (211 aa).

12-19 (GGSGSGKT) provides a ligand contact to ATP.

This sequence belongs to the uridine kinase family.

It is found in the cytoplasm. The catalysed reaction is uridine + ATP = UMP + ADP + H(+). It carries out the reaction cytidine + ATP = CMP + ADP + H(+). It functions in the pathway pyrimidine metabolism; CTP biosynthesis via salvage pathway; CTP from cytidine: step 1/3. It participates in pyrimidine metabolism; UMP biosynthesis via salvage pathway; UMP from uridine: step 1/1. In Bacillus subtilis (strain 168), this protein is Uridine kinase (udk).